The primary structure comprises 160 residues: Ribosomal RNA large subunit methyltransferase H (160 aa).

Residues 44-63 are disordered; it reads LPESRASNSATRKREEAVQI. S-adenosyl-L-methionine-binding positions include leucine 76, glycine 108, and 127-132; that span reads LGKMTW.

It belongs to the RNA methyltransferase RlmH family. Homodimer.

It localises to the cytoplasm. The catalysed reaction is pseudouridine(1915) in 23S rRNA + S-adenosyl-L-methionine = N(3)-methylpseudouridine(1915) in 23S rRNA + S-adenosyl-L-homocysteine + H(+). Specifically methylates the pseudouridine at position 1915 (m3Psi1915) in 23S rRNA. In Allorhizobium ampelinum (strain ATCC BAA-846 / DSM 112012 / S4) (Agrobacterium vitis (strain S4)), this protein is Ribosomal RNA large subunit methyltransferase H.